A 179-amino-acid chain; its full sequence is Large ribosomal subunit protein uL5 (179 aa).

Belongs to the universal ribosomal protein uL5 family. As to quaternary structure, part of the 50S ribosomal subunit; part of the 5S rRNA/L5/L18/L25 subcomplex. Contacts the 5S rRNA and the P site tRNA. Forms a bridge to the 30S subunit in the 70S ribosome.

Functionally, this is one of the proteins that bind and probably mediate the attachment of the 5S RNA into the large ribosomal subunit, where it forms part of the central protuberance. In the 70S ribosome it contacts protein S13 of the 30S subunit (bridge B1b), connecting the 2 subunits; this bridge is implicated in subunit movement. Contacts the P site tRNA; the 5S rRNA and some of its associated proteins might help stabilize positioning of ribosome-bound tRNAs. The protein is Large ribosomal subunit protein uL5 of Rickettsia akari (strain Hartford).